The sequence spans 721 residues: Actin-like protein arp5 (721 aa).

Residues 266–368 (EAAAQEKSQE…RDQQRQEESE (103 aa)) are a coiled coil. The tract at residues 486 to 507 (ATLASEQPIQKRKRKDQSEDNF) is disordered.

This sequence belongs to the actin family. As to quaternary structure, component of the INO80 chromatin remodeling complex.

It localises to the nucleus. In terms of biological role, component of the INO80 complex which remodels chromatin by shifting nucleosomes and is involved in DNA repair. The chain is Actin-like protein arp5 (arp5) from Schizosaccharomyces pombe (strain 972 / ATCC 24843) (Fission yeast).